Here is a 388-residue protein sequence, read N- to C-terminus: uncharacterized protein (388 aa).

Residues 68-96 (KVDRMSEEEERMAIATRKAKEVAKELSET) are a coiled coil. Positions 162 to 388 (GSHPLVREFN…PPQQDWFDSV (227 aa)) are disordered. 2 stretches are compositionally biased toward basic and acidic residues: residues 166–176 (LVREFNGEKPP) and 196–208 (ATDK…QSDK). Positions 233 to 251 (GVKHQHAIRRDDRHRHGMR) are enriched in basic residues. Low complexity-rich tracts occupy residues 265-279 (QQQQ…SRGQ) and 293-346 (QRRP…QRPA).

This is an uncharacterized protein from Frog virus 3 (isolate Goorha) (FV-3).